Consider the following 325-residue polypeptide: Glutarate 2-hydroxylase (325 aa).

Histidine 160, aspartate 162, and histidine 292 together coordinate Fe cation.

Belongs to the glutarate hydroxylase family. As to quaternary structure, homotetramer. Fe(2+) serves as cofactor.

It catalyses the reaction glutarate + 2-oxoglutarate + O2 = (S)-2-hydroxyglutarate + succinate + CO2. It participates in amino-acid degradation. Functionally, acts as an alpha-ketoglutarate-dependent dioxygenase catalyzing hydroxylation of glutarate (GA) to L-2-hydroxyglutarate (L2HG). Functions in a L-lysine degradation pathway that proceeds via cadaverine, glutarate and L-2-hydroxyglutarate. In Escherichia coli O157:H7, this protein is Glutarate 2-hydroxylase.